Here is a 479-residue protein sequence, read N- to C-terminus: D-aminoacyl-tRNA deacylase (479 aa).

It belongs to the DtdA deacylase family. In terms of assembly, monomer. It depends on Zn(2+) as a cofactor.

The enzyme catalyses a D-aminoacyl-tRNA + H2O = a tRNA + a D-alpha-amino acid + H(+). It catalyses the reaction glycyl-tRNA(Ala) + H2O = tRNA(Ala) + glycine + H(+). Functionally, D-aminoacyl-tRNA deacylase with broad substrate specificity. By recycling D-aminoacyl-tRNA to D-amino acids and free tRNA molecules, this enzyme counteracts the toxicity associated with the formation of D-aminoacyl-tRNA entities in vivo. This Methanococcoides burtonii (strain DSM 6242 / NBRC 107633 / OCM 468 / ACE-M) protein is D-aminoacyl-tRNA deacylase.